Consider the following 154-residue polypeptide: Catabolic 3-dehydroquinase (154 aa).

Y25 acts as the Proton acceptor in catalysis. Residues N79, H85, and D92 each coordinate substrate. The active-site Proton donor is the H105. Residues 106-107 (IS) and R116 contribute to the substrate site.

It belongs to the type-II 3-dehydroquinase family. Homododecamer. Adopts a ring-like structure, composed of an arrangement of two hexameric rings stacked on top of one another.

It catalyses the reaction 3-dehydroquinate = 3-dehydroshikimate + H2O. It participates in aromatic compound metabolism; 3,4-dihydroxybenzoate biosynthesis; 3,4-dihydroxybenzoate from 3-dehydroquinate: step 1/2. Its function is as follows. Is involved in the catabolism of quinate. Allows the utilization of quinate as carbon source via the beta-ketoadipate pathway. In Botryotinia fuckeliana (strain B05.10) (Noble rot fungus), this protein is Catabolic 3-dehydroquinase.